We begin with the raw amino-acid sequence, 235 residues long: Exosome complex component Rrp4 (235 aa).

Residues 63 to 137 (GDLVIGYVTD…DEYPIILTLK (75 aa)) enclose the S1 motif domain. The KH domain maps to 147 to 203 (GTVVEITPVKVPRVIGKRGSMLNTLMELGCDIVVGQNGRIWVKCKDPRDEVFLASLI).

It belongs to the RRP4 family. As to quaternary structure, component of the archaeal exosome complex. Forms a trimer of Rrp4 and/or Csl4 subunits. The trimer associates with a hexameric ring-like arrangement composed of 3 Rrp41-Rrp42 heterodimers.

It localises to the cytoplasm. In terms of biological role, non-catalytic component of the exosome, which is a complex involved in RNA degradation. Increases the RNA binding and the efficiency of RNA degradation. Confers strong poly(A) specificity to the exosome. This chain is Exosome complex component Rrp4, found in Pyrobaculum aerophilum (strain ATCC 51768 / DSM 7523 / JCM 9630 / CIP 104966 / NBRC 100827 / IM2).